The following is a 108-amino-acid chain: UPF0102 protein Sbal_4100 (108 aa).

Belongs to the UPF0102 family.

This Shewanella baltica (strain OS155 / ATCC BAA-1091) protein is UPF0102 protein Sbal_4100.